Here is a 517-residue protein sequence, read N- to C-terminus: DNA-binding protein Ikaros (517 aa).

A disordered region spans residues 1-71 (MDVDEGQDMS…QSDEENGRAC (71 aa)). Phosphoserine is present on serine 13. Residue threonine 23 is modified to Phosphothreonine. Polar residues predominate over residues 37 to 47 (LSTTSGAQQNS). A Glycyl lysine isopeptide (Lys-Gly) (interchain with G-Cter in SUMO) cross-link involves residue lysine 58. 2 positions are modified to phosphoserine: serine 63 and serine 101. The C2H2-type 1 zinc finger occupies 117 to 139 (LKCDICGIVCIGPNVLMVHKRSH). Position 140 is a phosphothreonine (threonine 140). A C2H2-type 2 zinc finger spans residues 144-166 (FQCNQCGASFTQKGNLLRHIKLH). The tract at residues 153-162 (FTQKGNLLRH) is required for both high-affinity DNA binding and pericentromeric heterochromatin localization. At serine 167 the chain carries Phosphoserine. A C2H2-type 3 zinc finger spans residues 172-194 (FKCHLCNYACRRRDALTGHLRTH). Residues 179 to 194 (YACRRRDALTGHLRTH) form a required for both high-affinity DNA binding and pericentromeric heterochromatin localization region. Serine 195 carries the phosphoserine modification. Residues 200–223 (HKCGYCGRSYKQRSSLEEHKERCH) form a C2H2-type 4 zinc finger. Lysine 239 is covalently cross-linked (Glycyl lysine isopeptide (Lys-Gly) (interchain with G-Cter in SUMO)). Serine 259, serine 287, serine 293, serine 357, serine 360, serine 384, serine 386, serine 388, and serine 392 each carry phosphoserine. The tract at residues 376 to 400 (SVSSEREASPSNSCQDSTDTESNAE) is disordered. At threonine 393 the chain carries Phosphothreonine. 2 positions are modified to phosphoserine: serine 397 and serine 440. C2H2-type zinc fingers lie at residues 457-479 (YKCE…MGCH) and 488-512 (FECN…RGEH). Residues 463–466 (RVLF) form a required for binding PP1CC region.

It belongs to the Ikaros C2H2-type zinc-finger protein family. In terms of assembly, heterodimer with other IKAROS family members. Interacts with IKZF4 and IKZF5. Component of the chromatin-remodeling NuRD repressor complex which includes at least HDAC1, HDAC2, RBBP4, RBBP7, IKZF1, MTA2, MBD2, MBD3, MTA1L1, CHD3 and CHD4. Interacts directly with the CHD4 component of the NuRD complex. Interacts directly with SMARCA4; the interaction associates IKFZ1 with the BAF complex. Interacts with SUMO1; the interaction sumoylates IKAROS, promoted by PIAS2 and PIAS3. Interacts with PIAS2 (isoform alpha); the interaction promotes sumoylation and reduces transcription repression. Interacts, to a lesser extent, with PIAS3. Interacts with PPP1CC; the interaction targets PPP1CC to pericentromeric heterochromatin, dephosphorylates IKAROS, stabilizes it and prevents it from degradation. Interacts with IKZF3. Phosphorylation at Ser-357 and Ser-360 downstream of SYK induces nuclear translocation. Phosphorylation controls cell-cycle progression from late G(1) stage to S stage. Hyperphosphorylated during G2/M phase. Dephosphorylated state during late G(1) phase. Phosphorylation on Thr-140 is required for DNA and pericentromeric location during mitosis. CK2 is the main kinase, in vitro. GSK3 and CDK may also contribute to phosphorylation of the C-terminal serine and threonine residues. Phosphorylation on these C-terminal residues reduces the DNA-binding ability. Phosphorylation/dephosphorylation events on Ser-13 and Ser-293 regulate TDT expression during thymocyte differentiation. Dephosphorylation by protein phosphatase 1 regulates stability and pericentromeric heterochromatin location. Phosphorylated in both lymphoid and non-lymphoid tissues. In terms of processing, sumoylated. Simultaneous sumoylation on the 2 sites results in a loss of both HDAC-dependent and HDAC-independent repression. Has no effect on pericentromeric heterochromatin location. Desumoylated by SENP1. Post-translationally, polyubiquitinated. As to expression, strongly expressed in T-cells and their progenitors,in B-cells, and in all early embryonic retinal progenitor cells (RPCs). Isoforms V and VI are the predominant isoforms in lymphocytes.

Its subcellular location is the nucleus. The protein localises to the cytoplasm. Functionally, transcription regulator of hematopoietic cell differentiation. Binds gamma-satellite DNA. Binds with higher affinity to gamma satellite A. Plays a role in the development of lymphocytes, B- and T-cells. Binds and activates the enhancer (delta-A element) of the CD3-delta gene. Repressor of the TDT (terminal deoxynucleotidyltransferase) gene during thymocyte differentiation. Regulates transcription through association with both HDAC-dependent and HDAC-independent complexes. Targets the 2 chromatin-remodeling complexes, NuRD and BAF (SWI/SNF), in a single complex (PYR complex), to the beta-globin locus in adult erythrocytes. Increases normal apoptosis in adult erythroid cells. Confers early temporal competence to retinal progenitor cells (RPCs). Function is isoform-specific and is modulated by dominant-negative inactive isoforms. This chain is DNA-binding protein Ikaros (Ikzf1), found in Mus musculus (Mouse).